A 550-amino-acid polypeptide reads, in one-letter code: 65-kDa microtubule-associated protein 5 (550 aa).

Coiled coils occupy residues 46-174 (NKKV…QKVN) and 288-310 (IREA…KELV). Positions 471–531 (QFREQKRLQG…PGRSVTSGGK (61 aa)) are disordered. A compositionally biased stretch (polar residues) spans 502–511 (QSLNTDNVTK).

It belongs to the MAP65/ASE1 family. Forms a dimer. Binds to MT, mostly with coaligned MT, both between parallel or antiparallel, forming thick bundles. Bundles polymerized MT via the formation of 25-nm crossbridges with cortical MT.

It is found in the nucleus. It localises to the cytoplasm. The protein resides in the cytoskeleton. The protein localises to the spindle. Its subcellular location is the phragmoplast. It is found in the cell cortex. It localises to the cell junction. The protein resides in the plasmodesma. In terms of biological role, microtubule-associated protein that bundle and stabilize adjacent microtubules (MT) of the cell cortex. Confers MT resistance to the drug oryzalin. Promotes the formation of a planar network of antiparallel microtubules. In Arabidopsis thaliana (Mouse-ear cress), this protein is 65-kDa microtubule-associated protein 5 (MAP65-5).